A 500-amino-acid polypeptide reads, in one-letter code: Tektin-like protein 1 (500 aa).

Residues 198-229 are a coiled coil; sequence MLTWEKEELKSMKRKMEADMEKSEALLKTLAS. Residue tyrosine 372 is modified to Phosphotyrosine. Positions 420-444 form a coiled coil; sequence DKLQRHISHVEKNLDELLSMRKKLT.

Microtubule inner protein component of sperm flagellar doublet microtubules.

The protein localises to the cytoplasm. It is found in the cytoskeleton. Its subcellular location is the flagellum axoneme. In terms of biological role, microtubule inner protein (MIP) part of the dynein-decorated doublet microtubules (DMTs) in sperm flagellar axoneme, which is required for motile flagellum beating. Forms an extensive interaction network cross-linking the lumen of axonemal doublet microtubules. This Bos taurus (Bovine) protein is Tektin-like protein 1.